The sequence spans 628 residues: Nucleoside-triphosphatase 1 (628 aa).

An N-terminal signal peptide occupies residues 1 to 25 (MWLPVYVPLLLVFGVSLSLPQGSLG). Glu236 acts as the Proton acceptor in catalysis. N-linked (GlcNAc...) asparagine glycosylation is present at Asn432.

This sequence belongs to the GDA1/CD39 NTPase family. In terms of assembly, homotetramer.

The protein resides in the secreted. It localises to the parasitophorous vacuole. It catalyses the reaction a ribonucleoside 5'-triphosphate + H2O = a ribonucleoside 5'-diphosphate + phosphate + H(+). Functionally, may perform an important processing step in the conversion of high energy nucleotides prior to uptake by the parasite and may contribute to intracellular survival and virulence. NTPAse-I has a specific activity 4.5-fold higher than NTPAse-II in hydrolysis of ATP. The primary difference between these isozymes lies in their ability to hydrolyze nucleoside triphosphate versus diphosphate substrates. While NTPAse-II hydrolyzes ATP to ADP and ADP to AMP at almost the same rate, NTPAse-I hydrolyzes ADP to AMP at a much slower rate (0.7% of the rate for ATP). In Toxoplasma gondii, this protein is Nucleoside-triphosphatase 1 (NTP3).